The sequence spans 735 residues: Nuclear intron maturase 2, mitochondrial (735 aa).

The transit peptide at 1 to 12 (MRRSFSVLGPYK) directs the protein to the mitochondrion. In terms of domain architecture, Reverse transcriptase spans 161–460 (RDKTDYESLS…KGIMFLDHVL (300 aa)). The tract at residues 485 to 653 (GTLLSVTASL…KFLIEYLTLD (169 aa)) is intron maturase type-2. Residues 707–735 (SSTYNRDNDDQKNKEEDEDSEDGLRIARM) are disordered. Over residues 712 to 721 (RDNDDQKNKE) the composition is skewed to basic and acidic residues.

It belongs to the plant nuclear intron maturase (nMat) family. Associated to a large ribonucleoprotein complex in mitochondria containing group-II intron RNAs.

The protein resides in the mitochondrion. Its function is as follows. Nuclear-encoded maturase required for splicing of group-II introns in mitochondria. Involved in the splicing of mitochondrial COX2, NAD1 and NAD7 transcripts. Necessary for mitochondrial biogenesis during early developmental stages. This chain is Nuclear intron maturase 2, mitochondrial, found in Arabidopsis thaliana (Mouse-ear cress).